The primary structure comprises 535 residues: T-complex protein 1 subunit beta (535 aa).

Met-1 carries the N-acetylmethionine modification. Position 2 is an N-acetylalanine (Ala-2). Ser-3 is subject to Phosphoserine. Position 13 is an N6-acetyllysine (Lys-13). Gly-44 lines the ADP pocket. Gly-44 is a binding site for ATP. Ser-60 is modified (phosphoserine). A Mg(2+)-binding site is contributed by Asp-97. 4 residues coordinate ADP: Gly-98, Thr-99, Thr-100, and Ser-101. Residues Gly-98, Thr-99, and Thr-100 each coordinate ATP. N6-acetyllysine is present on Lys-154. ADP is bound by residues Ser-168 and Ser-169. Residue Lys-181 is modified to N6-acetyllysine. A Glycyl lysine isopeptide (Lys-Gly) (interchain with G-Cter in SUMO2) cross-link involves residue Lys-248. Phosphoserine is present on Ser-260. Position 261 is a phosphothreonine (Thr-261). Residues Gly-410, Glu-495, and Lys-500 each coordinate ADP. ATP-binding residues include Glu-495 and Lys-500.

It belongs to the TCP-1 chaperonin family. As to quaternary structure, component of the chaperonin-containing T-complex (TRiC), a hexadecamer composed of two identical back-to-back stacked rings enclosing a protein folding chamber. Each ring is made up of eight different subunits: TCP1/CCT1, CCT2, CCT3, CCT4, CCT5, CCT6A/CCT6, CCT7, CCT8. Interacts with PACRG. Interacts with FLCN. Interacts with DLEC1. Interacts with SVEP1.

The protein localises to the cytoplasm. It carries out the reaction ATP + H2O = ADP + phosphate + H(+). In terms of biological role, component of the chaperonin-containing T-complex (TRiC), a molecular chaperone complex that assists the folding of actin, tubulin and other proteins upon ATP hydrolysis. The TRiC complex mediates the folding of WRAP53/TCAB1, thereby regulating telomere maintenance. As part of the TRiC complex may play a role in the assembly of BBSome, a complex involved in ciliogenesis regulating transports vesicles to the cilia. The polypeptide is T-complex protein 1 subunit beta (Homo sapiens (Human)).